We begin with the raw amino-acid sequence, 713 residues long: MARSTPIERYRNFGIMAHIDAGKTTTSERILFYTGKSHKIGEVHDGAATMDWMEQEQERGITIQSAATTAFWKGMDKSLPEHRFNIIDTPGHVDFTIEVERSLRVLDGAVFVLCAVGGVQPQSETVWRQANKYHVPRIAFVNKMDRTGANFQKVVGQLKAKLGAVAVPMQLPIGAEDNFKGVVDLLKMKAIHWDEASQGMKFEYSDIPADLQAAAEEARQFMVETAAEASEELMEKYLGGEELAEAEIINALRTRTLATEIVPMYCGSAFKNKGVQAMLDGVIQLLPSPVDVPDVKGVDVDDDTVEMTRKSDDKAPFSSLAFKIITDPFVGALTFFRVYSGTLNGGDTVLNSVKGKKERIGRILQMHSNNREEIKEVLAGDIAAAVGLKDTTTGDTLCAVDAPIILERMTFPEPVISMAVEPKTKSDQEKMGLALGRLAQEDPSFRVKTDEESGQTIISGMGELHLDIIVDRLKREFNVEANVGAPQVAYRETITLADVKSDYKHAKQSGGKGQYGHVVIELSPITAADRADPKLAPAIKDDFLFINDITGGVIPKEFIPSVEKGLRETITSGPLAGFPVVDVKVKLVFGSYHDVDSSEMAFKLASSMAFKQGFAKAKPVLLEPIMKVEIVTPEDYQGDVMGDVSRRRGVLQGSDTTGDGSASIINAMIPLGEMFGYATALRSQTQGRATFTMEFDHYEPAPTNIAEAVMKKG.

Residues Glu8–Val290 enclose the tr-type G domain. GTP is bound by residues Ala17–Thr24, Asp88–His92, and Asn142–Asp145.

It belongs to the TRAFAC class translation factor GTPase superfamily. Classic translation factor GTPase family. EF-G/EF-2 subfamily.

It localises to the cytoplasm. Catalyzes the GTP-dependent ribosomal translocation step during translation elongation. During this step, the ribosome changes from the pre-translocational (PRE) to the post-translocational (POST) state as the newly formed A-site-bound peptidyl-tRNA and P-site-bound deacylated tRNA move to the P and E sites, respectively. Catalyzes the coordinated movement of the two tRNA molecules, the mRNA and conformational changes in the ribosome. The protein is Elongation factor G of Stenotrophomonas maltophilia (strain K279a).